We begin with the raw amino-acid sequence, 186 residues long: uncharacterized protein (186 aa).

This is an uncharacterized protein from Caenorhabditis elegans.